The chain runs to 115 residues: Nucleoid-associated protein Rpic_1036 (115 aa).

It belongs to the YbaB/EbfC family. In terms of assembly, homodimer.

The protein localises to the cytoplasm. Its subcellular location is the nucleoid. Functionally, binds to DNA and alters its conformation. May be involved in regulation of gene expression, nucleoid organization and DNA protection. The sequence is that of Nucleoid-associated protein Rpic_1036 from Ralstonia pickettii (strain 12J).